Reading from the N-terminus, the 488-residue chain is Probable glycine dehydrogenase (decarboxylating) subunit 2 (488 aa).

K264 bears the N6-(pyridoxal phosphate)lysine mark.

It belongs to the GcvP family. C-terminal subunit subfamily. In terms of assembly, the glycine cleavage system is composed of four proteins: P, T, L and H. In this organism, the P 'protein' is a heterodimer of two subunits. Pyridoxal 5'-phosphate is required as a cofactor.

It carries out the reaction N(6)-[(R)-lipoyl]-L-lysyl-[glycine-cleavage complex H protein] + glycine + H(+) = N(6)-[(R)-S(8)-aminomethyldihydrolipoyl]-L-lysyl-[glycine-cleavage complex H protein] + CO2. In terms of biological role, the glycine cleavage system catalyzes the degradation of glycine. The P protein binds the alpha-amino group of glycine through its pyridoxal phosphate cofactor; CO(2) is released and the remaining methylamine moiety is then transferred to the lipoamide cofactor of the H protein. In Methylococcus capsulatus (strain ATCC 33009 / NCIMB 11132 / Bath), this protein is Probable glycine dehydrogenase (decarboxylating) subunit 2.